Here is a 355-residue protein sequence, read N- to C-terminus: Holliday junction branch migration complex subunit RuvB (355 aa).

Residues 1 to 193 are large ATPase domain (RuvB-L); it reads MGRFSEDSAD…FGFTAHMDFY (193 aa). ATP-binding positions include leucine 32, arginine 33, glycine 74, lysine 77, threonine 78, serine 79, 140-142, arginine 183, tyrosine 193, and arginine 230; that span reads EDF. Threonine 78 contacts Mg(2+). The small ATPAse domain (RuvB-S) stretch occupies residues 194–264; sequence EPSELERVLA…IAKYALEVYD (71 aa). Residues 267–355 form a head domain (RuvB-H) region; that stretch reads ELGLDRLDRA…VGLGQTGLFD (89 aa). The DNA site is built by arginine 322 and arginine 327.

The protein belongs to the RuvB family. Homohexamer. Forms an RuvA(8)-RuvB(12)-Holliday junction (HJ) complex. HJ DNA is sandwiched between 2 RuvA tetramers; dsDNA enters through RuvA and exits via RuvB. An RuvB hexamer assembles on each DNA strand where it exits the tetramer. Each RuvB hexamer is contacted by two RuvA subunits (via domain III) on 2 adjacent RuvB subunits; this complex drives branch migration. In the full resolvosome a probable DNA-RuvA(4)-RuvB(12)-RuvC(2) complex forms which resolves the HJ.

Its subcellular location is the cytoplasm. It catalyses the reaction ATP + H2O = ADP + phosphate + H(+). In terms of biological role, the RuvA-RuvB-RuvC complex processes Holliday junction (HJ) DNA during genetic recombination and DNA repair, while the RuvA-RuvB complex plays an important role in the rescue of blocked DNA replication forks via replication fork reversal (RFR). RuvA specifically binds to HJ cruciform DNA, conferring on it an open structure. The RuvB hexamer acts as an ATP-dependent pump, pulling dsDNA into and through the RuvAB complex. RuvB forms 2 homohexamers on either side of HJ DNA bound by 1 or 2 RuvA tetramers; 4 subunits per hexamer contact DNA at a time. Coordinated motions by a converter formed by DNA-disengaged RuvB subunits stimulates ATP hydrolysis and nucleotide exchange. Immobilization of the converter enables RuvB to convert the ATP-contained energy into a lever motion, pulling 2 nucleotides of DNA out of the RuvA tetramer per ATP hydrolyzed, thus driving DNA branch migration. The RuvB motors rotate together with the DNA substrate, which together with the progressing nucleotide cycle form the mechanistic basis for DNA recombination by continuous HJ branch migration. Branch migration allows RuvC to scan DNA until it finds its consensus sequence, where it cleaves and resolves cruciform DNA. The sequence is that of Holliday junction branch migration complex subunit RuvB from Mycolicibacterium vanbaalenii (strain DSM 7251 / JCM 13017 / BCRC 16820 / KCTC 9966 / NRRL B-24157 / PYR-1) (Mycobacterium vanbaalenii).